We begin with the raw amino-acid sequence, 351 residues long: Adenine deaminase (351 aa).

Residues histidine 20, histidine 22, and histidine 200 each coordinate Zn(2+). Catalysis depends on glutamate 203, which acts as the Proton donor. Aspartate 281 is a Zn(2+) binding site. Aspartate 282 lines the substrate pocket.

This sequence belongs to the metallo-dependent hydrolases superfamily. Adenosine and AMP deaminases family. Adenine deaminase type 2 subfamily. The cofactor is Zn(2+).

It catalyses the reaction adenine + H2O + H(+) = hypoxanthine + NH4(+). Its function is as follows. Catalyzes the hydrolytic deamination of adenine to hypoxanthine. Plays an important role in the purine salvage pathway and in nitrogen catabolism. This chain is Adenine deaminase, found in Cupriavidus taiwanensis (strain DSM 17343 / BCRC 17206 / CCUG 44338 / CIP 107171 / LMG 19424 / R1) (Ralstonia taiwanensis (strain LMG 19424)).